We begin with the raw amino-acid sequence, 121 residues long: Large ribosomal subunit protein bL20 (121 aa).

Belongs to the bacterial ribosomal protein bL20 family.

Binds directly to 23S ribosomal RNA and is necessary for the in vitro assembly process of the 50S ribosomal subunit. It is not involved in the protein synthesizing functions of that subunit. This is Large ribosomal subunit protein bL20 from Orientia tsutsugamushi (strain Ikeda) (Rickettsia tsutsugamushi).